A 609-amino-acid chain; its full sequence is UvrABC system protein C (609 aa).

The GIY-YIG domain maps to 16 to 94 (SSAGVYRMYD…IKQYMPKYNV (79 aa)). One can recognise a UVR domain in the interval 203 to 238 (QQVISALVDKMELAAERQAYEQAARFRDQIMALRKV).

This sequence belongs to the UvrC family. Interacts with UvrB in an incision complex.

The protein localises to the cytoplasm. The UvrABC repair system catalyzes the recognition and processing of DNA lesions. UvrC both incises the 5' and 3' sides of the lesion. The N-terminal half is responsible for the 3' incision and the C-terminal half is responsible for the 5' incision. The polypeptide is UvrABC system protein C (Shewanella baltica (strain OS195)).